The sequence spans 82 residues: uncharacterized protein (82 aa).

To M.thermoautotrophicum MTH386.

This is an uncharacterized protein from Methanocaldococcus jannaschii (strain ATCC 43067 / DSM 2661 / JAL-1 / JCM 10045 / NBRC 100440) (Methanococcus jannaschii).